We begin with the raw amino-acid sequence, 182 residues long: Pyruvoyl-dependent arginine decarboxylase (182 aa).

Ser44 bears the Pyruvic acid (Ser) mark.

Belongs to the PdaD family. Requires pyruvate as cofactor.

It carries out the reaction L-arginine + H(+) = agmatine + CO2. The polypeptide is Pyruvoyl-dependent arginine decarboxylase (Picrophilus torridus (strain ATCC 700027 / DSM 9790 / JCM 10055 / NBRC 100828 / KAW 2/3)).